Here is an 84-residue protein sequence, read N- to C-terminus: Molybdopterin synthase sulfur carrier subunit (84 aa).

Gly84 is subject to 1-thioglycine; alternate. Gly84 bears the Glycyl adenylate; alternate mark.

Belongs to the MoaD family. MOCS2A subfamily. In terms of assembly, heterotetramer; composed of 2 small (MOCS2A) and 2 large (MOCS2B) subunits. Post-translationally, C-terminal thiocarboxylation occurs in 2 steps, it is first acyl-adenylated (-COAMP) via the hesA/moeB/thiF part of MOCS3, then thiocarboxylated (-COSH) via the rhodanese domain of MOCS3.

Its subcellular location is the cytoplasm. It participates in cofactor biosynthesis; molybdopterin biosynthesis. In terms of biological role, acts as a sulfur carrier required for molybdopterin biosynthesis. Component of the molybdopterin synthase complex that catalyzes the conversion of precursor Z into molybdopterin by mediating the incorporation of 2 sulfur atoms into precursor Z to generate a dithiolene group. In the complex, serves as sulfur donor by being thiocarboxylated (-COSH) at its C-terminus by MOCS3. After interaction with MOCS2B, the sulfur is then transferred to precursor Z to form molybdopterin. This Caenorhabditis briggsae protein is Molybdopterin synthase sulfur carrier subunit.